Reading from the N-terminus, the 96-residue chain is uncharacterized protein (96 aa).

A helical membrane pass occupies residues 1–21 (MSDFEIIVGISSLLQVIILNI).

The protein localises to the membrane. This is an uncharacterized protein from Saccharomyces cerevisiae (strain ATCC 204508 / S288c) (Baker's yeast).